We begin with the raw amino-acid sequence, 247 residues long: Adenosylcobinamide-GDP ribazoletransferase (247 aa).

5 consecutive transmembrane segments (helical) span residues 34–54, 59–79, 113–133, 138–158, and 194–214; these read IITFPLIGLLLGAISGLVFMV, CGAPLAALFSVLVLVLMTGGF, GGLALIFVVLAKILVLSELAL, ILASLAAACAISRGTAALLMY, and VLLPGMHGVAAMVVTMVAIFI.

Belongs to the CobS family. Requires Mg(2+) as cofactor.

It is found in the cell inner membrane. The enzyme catalyses alpha-ribazole + adenosylcob(III)inamide-GDP = adenosylcob(III)alamin + GMP + H(+). It carries out the reaction alpha-ribazole 5'-phosphate + adenosylcob(III)inamide-GDP = adenosylcob(III)alamin 5'-phosphate + GMP + H(+). It participates in cofactor biosynthesis; adenosylcobalamin biosynthesis; adenosylcobalamin from cob(II)yrinate a,c-diamide: step 7/7. In terms of biological role, joins adenosylcobinamide-GDP and alpha-ribazole to generate adenosylcobalamin (Ado-cobalamin). Also synthesizes adenosylcobalamin 5'-phosphate from adenosylcobinamide-GDP and alpha-ribazole 5'-phosphate. This is Adenosylcobinamide-GDP ribazoletransferase from Escherichia coli O45:K1 (strain S88 / ExPEC).